Reading from the N-terminus, the 348-residue chain is High mobility group protein 20A (348 aa).

2 disordered regions span residues 1–114 (MENL…YVRF) and 181–213 (SRKA…DTKE). 2 stretches are compositionally biased toward polar residues: residues 34-47 (SESS…QPVN) and 56-71 (SQVQ…TAEN). Residues 72–82 (TEQKPEEEQQR) show a composition bias toward basic and acidic residues. Residues 83 to 97 (TKRGGWAKGRKRKKP) show a composition bias toward basic residues. The segment at residues 104-172 (PKSPLTGYVR…RYMRELEQYQ (69 aa)) is a DNA-binding region (HMG box). Residues 183–213 (KAQDRQKGKLHRQDGARQPVHDHEKEADTKE) are compositionally biased toward basic and acidic residues. The stretch at 230-274 (SKAREAELRQLRKSNMEFEERNAALQKHVESMRTAVEKLEVDVIQ) forms a coiled coil.

Its subcellular location is the nucleus. In terms of biological role, plays a role in neuronal differentiation. This Gallus gallus (Chicken) protein is High mobility group protein 20A (HMG20A).